A 120-amino-acid polypeptide reads, in one-letter code: UPF0102 protein FRAAL5785 (120 aa).

It belongs to the UPF0102 family.

The sequence is that of UPF0102 protein FRAAL5785 from Frankia alni (strain DSM 45986 / CECT 9034 / ACN14a).